We begin with the raw amino-acid sequence, 373 residues long: tRNA/tmRNA (uracil-C(5))-methyltransferase (373 aa).

Positions 190, 219, 224, 240, and 300 each coordinate S-adenosyl-L-methionine. The active-site Nucleophile is Cys-325. The Proton acceptor role is filled by Glu-359.

It belongs to the class I-like SAM-binding methyltransferase superfamily. RNA M5U methyltransferase family. TrmA subfamily.

The catalysed reaction is uridine(54) in tRNA + S-adenosyl-L-methionine = 5-methyluridine(54) in tRNA + S-adenosyl-L-homocysteine + H(+). It catalyses the reaction uridine(341) in tmRNA + S-adenosyl-L-methionine = 5-methyluridine(341) in tmRNA + S-adenosyl-L-homocysteine + H(+). Functionally, dual-specificity methyltransferase that catalyzes the formation of 5-methyluridine at position 54 (m5U54) in all tRNAs, and that of position 341 (m5U341) in tmRNA (transfer-mRNA). The polypeptide is tRNA/tmRNA (uracil-C(5))-methyltransferase (Chromohalobacter salexigens (strain ATCC BAA-138 / DSM 3043 / CIP 106854 / NCIMB 13768 / 1H11)).